The sequence spans 295 residues: Protoheme IX farnesyltransferase (295 aa).

Transmembrane regions (helical) follow at residues 8–28 (ITKP…FFLA), 35–55 (GGLF…GCVF), 83–103 (GVTL…LWFG), 107–127 (LATA…SLYL), 132–152 (IYGT…GYCA), 162–182 (LTLL…IAIF), 208–228 (IFWY…GGYA), 229–249 (GYGY…MALR), and 263–283 (VFIF…IDFQ).

The protein belongs to the UbiA prenyltransferase family. Protoheme IX farnesyltransferase subfamily.

It localises to the cell inner membrane. It catalyses the reaction heme b + (2E,6E)-farnesyl diphosphate + H2O = Fe(II)-heme o + diphosphate. Its pathway is porphyrin-containing compound metabolism; heme O biosynthesis; heme O from protoheme: step 1/1. Converts heme B (protoheme IX) to heme O by substitution of the vinyl group on carbon 2 of heme B porphyrin ring with a hydroxyethyl farnesyl side group. In Chromohalobacter salexigens (strain ATCC BAA-138 / DSM 3043 / CIP 106854 / NCIMB 13768 / 1H11), this protein is Protoheme IX farnesyltransferase.